The following is a 119-amino-acid chain: Hydrogenase maturation factor HypA (119 aa).

Position 2 (H2) interacts with Ni(2+). C73, C76, C90, and C93 together coordinate Zn(2+).

It belongs to the HypA/HybF family.

Its function is as follows. Involved in the maturation of [NiFe] hydrogenases. Required for nickel insertion into the metal center of the hydrogenase. In Wolinella succinogenes (strain ATCC 29543 / DSM 1740 / CCUG 13145 / JCM 31913 / LMG 7466 / NCTC 11488 / FDC 602W) (Vibrio succinogenes), this protein is Hydrogenase maturation factor HypA.